The following is a 73-amino-acid chain: Probable cytochrome b-c1 complex subunit 8 (73 aa).

Residues 1–42 lie on the Mitochondrial matrix side of the membrane; sequence MGQASKVFGKQITYSVSPFQQKLFVNYFKNAIPHLRRGVKDN. Residues 43–60 traverse the membrane as a helical segment; the sequence is FFCSVPYFAALYITVNWA. The Mitochondrial intermembrane portion of the chain corresponds to 61–73; that stretch reads NETYHNEMKDHWY.

This sequence belongs to the UQCRQ/QCR8 family. Component of the ubiquinol-cytochrome c oxidoreductase (cytochrome b-c1 complex, complex III, CIII), a multisubunit enzyme composed of 3 respiratory subunits cytochrome b, cytochrome c1 and Rieske protein, 2 core protein subunits, and additional low-molecular weight protein subunits. The complex exists as an obligatory dimer and forms supercomplexes (SCs) in the inner mitochondrial membrane with cytochrome c oxidase (complex IV, CIV).

Its subcellular location is the mitochondrion inner membrane. Its function is as follows. Component of the ubiquinol-cytochrome c oxidoreductase, a multisubunit transmembrane complex that is part of the mitochondrial electron transport chain which drives oxidative phosphorylation. The respiratory chain contains 3 multisubunit complexes succinate dehydrogenase (complex II, CII), ubiquinol-cytochrome c oxidoreductase (cytochrome b-c1 complex, complex III, CIII) and cytochrome c oxidase (complex IV, CIV), that cooperate to transfer electrons derived from NADH and succinate to molecular oxygen, creating an electrochemical gradient over the inner membrane that drives transmembrane transport and the ATP synthase. The cytochrome b-c1 complex catalyzes electron transfer from ubiquinol to cytochrome c, linking this redox reaction to translocation of protons across the mitochondrial inner membrane, with protons being carried across the membrane as hydrogens on the quinol. In the process called Q cycle, 2 protons are consumed from the matrix, 4 protons are released into the intermembrane space and 2 electrons are passed to cytochrome c. This chain is Probable cytochrome b-c1 complex subunit 8, found in Dictyostelium discoideum (Social amoeba).